The sequence spans 268 residues: L-proline trans-4-hydroxylase (268 aa).

3 residues coordinate Fe cation: His113, Asp115, and His218.

It belongs to the PhyH family. Monomer. Requires Fe(2+) as cofactor.

It carries out the reaction L-proline + 2-oxoglutarate + O2 = trans-4-hydroxy-L-proline + succinate + CO2. It functions in the pathway antibiotic biosynthesis. With respect to regulation, competitively inhibited by pyridine-2,4-dicarboxylate. Inhibited by diethyl pyrocarbonate (DEPC), 3,4-dihydroxybenzoate, pyridine-2,5-dicarboxylate, alpha,alpha'-dipyridyl, and some metal ions such as Co(2+) and Zn(2+). Involved in the biosynthesis of the peptidolactone antibiotic etamycin (viridogrisein). Catalyzes the hydroxylation of free L-proline at the C-4 position to yield trans-4-hydroxy-L-proline. This chain is L-proline trans-4-hydroxylase, found in Streptomyces griseoviridis.